We begin with the raw amino-acid sequence, 750 residues long: Photosystem I P700 chlorophyll a apoprotein A1 (750 aa).

Transmembrane regions (helical) follow at residues 70 to 93, 156 to 179, 195 to 219, 291 to 309, 346 to 369, 385 to 411, 433 to 455, and 531 to 549; these read VFSAHFGQLSIIFLWLSGMYFHGA, LYCTAIGALVFAALMLFAGWFHYH, LNHHLAGLLGLGSLSWAGHQVHVSL, IAHHHLAIAILFLVAGHMY, WHAQLSLNLAMLGSSTIVVAHHMY, LSLFTHHMWIGGFLIVGAAAHAAIFMV, AIISHLNWACIFLGFHSFGLYIH, and FLVHHIHAFTIHVTVLILL. [4Fe-4S] cluster-binding residues include cysteine 573 and cysteine 582. 2 helical membrane-spanning segments follow: residues 589–610 and 664–686; these read HVFLGLFWMYNAISVVIFHFSW and LSAYGLFFLGAHFVWAFSLMFLF. Residue histidine 675 participates in chlorophyll a' binding. Chlorophyll a-binding residues include methionine 683 and tyrosine 691. Position 692 (tryptophan 692) interacts with phylloquinone. The helical transmembrane segment at 724–744 threads the bilayer; the sequence is AVGVTHYLLGGIATTWAFFLA.

Belongs to the PsaA/PsaB family. The PsaA/B heterodimer binds the P700 chlorophyll special pair and subsequent electron acceptors. PSI consists of a core antenna complex that captures photons, and an electron transfer chain that converts photonic excitation into a charge separation. The eukaryotic PSI reaction center is composed of at least 11 subunits. P700 is a chlorophyll a/chlorophyll a' dimer, A0 is one or more chlorophyll a, A1 is one or both phylloquinones and FX is a shared 4Fe-4S iron-sulfur center. is required as a cofactor.

The protein localises to the plastid. The protein resides in the chloroplast thylakoid membrane. It carries out the reaction reduced [plastocyanin] + hnu + oxidized [2Fe-2S]-[ferredoxin] = oxidized [plastocyanin] + reduced [2Fe-2S]-[ferredoxin]. Functionally, psaA and PsaB bind P700, the primary electron donor of photosystem I (PSI), as well as the electron acceptors A0, A1 and FX. PSI is a plastocyanin-ferredoxin oxidoreductase, converting photonic excitation into a charge separation, which transfers an electron from the donor P700 chlorophyll pair to the spectroscopically characterized acceptors A0, A1, FX, FA and FB in turn. Oxidized P700 is reduced on the lumenal side of the thylakoid membrane by plastocyanin. The sequence is that of Photosystem I P700 chlorophyll a apoprotein A1 from Calycanthus floridus var. glaucus (Eastern sweetshrub).